The sequence spans 438 residues: Xanthine permease (438 aa).

13 consecutive transmembrane segments (helical) span residues 11 to 31 (LGIQ…LIVG), 41 to 61 (LTYL…LQVW), 65 to 85 (FFGI…SPMI), 100 to 120 (IIAS…LVSF), 121 to 141 (FPPV…MPVA), 154 to 174 (FGDL…VLLY), 180 to 200 (FIKS…AYFM), 220 to 240 (FYFG…IVAI), 272 to 292 (AEGL…TAFS), 308 to 328 (VIVV…IAAF), 331 to 351 (IIPS…VIAY), 367 to 387 (LLIV…PDIF), and 396 to 416 (LLTT…NIVY).

Belongs to the nucleobase:cation symporter-2 (NCS2) (TC 2.A.40) family.

It is found in the cell membrane. In terms of biological role, transport of xanthine in the cell. The sequence is that of Xanthine permease (pbuX) from Bacillus subtilis (strain 168).